Reading from the N-terminus, the 1310-residue chain is Adhesion G protein-coupled receptor A3 (1310 aa).

The N-terminal stretch at 1-27 (MEPPPPLLLLPLALLALLWGGERGAAA) is a signal peptide. In terms of domain architecture, LRRNT spans 28 to 70 (LPAGCKHDGRARGTGRAAAAAEGKVVCSSLELAQVLPPDTLPN). Over 28-747 (LPAGCKHDGR…TELYTPAASL (720 aa)) the chain is Extracellular. N-linked (GlcNAc...) asparagine glycosylation is found at Asn-70 and Asn-87. 4 LRR repeats span residues 71-92 (RTVT…SFSG), 95-116 (LLER…AFWG), 119-140 (SLKR…VFRG), and 143-164 (NLVR…TFDY). Asn-148, Asn-195, Asn-290, Asn-321, Asn-422, Asn-442, Asn-581, Asn-641, Asn-676, and Asn-717 each carry an N-linked (GlcNAc...) asparagine glycan. The region spanning 176–226 (EYLLCDCNILWMHRWVKERNITVRDTRCVYPKSLQAQPVTGVKQELLTCDP) is the LRRCT domain. The region spanning 231 to 329 (PSFYMTPSHR…GNNTRTVDIV (99 aa)) is the Ig-like domain. A disulfide bridge links Cys-253 with Cys-313. In terms of domain architecture, GAIN-B spans 572-739 (LDKQLSFKCN…AVLMDLTGTE (168 aa)). A GPS region spans residues 690–739 (AAQWDFDLLNGQGGWKSDGCCILYSDENITTIQCGSLGNYAVLMDLTGTE). Cysteines 709 and 723 form a disulfide. The helical transmembrane segment at 748–768 (LHPVVYTTAITLLLCLLAVII) threads the bilayer. Residues 769–785 (SYMYHHSLIRISLKSWH) lie on the Cytoplasmic side of the membrane. The chain crosses the membrane as a helical span at residues 786 to 806 (MLVNLCFHILLTCVVFVGGIT). The Extracellular segment spans residues 807 to 815 (QTRNASVCQ). The N-linked (GlcNAc...) asparagine glycan is linked to Asn-810. Residues 816-836 (AVGIILHYSTLATVLWVGVTA) traverse the membrane as a helical segment. Residues 837-865 (RNIYKQVTKKAKRCQDPDEPPAPPRPMLR) are Cytoplasmic-facing. The helical transmembrane segment at 866–886 (FYLIGGGIPIIVCGITAAANI) threads the bilayer. At 887–908 (KNYGSRPSAPYCWMAWEPSLGA) the chain is on the extracellular side. The chain crosses the membrane as a helical span at residues 909 to 929 (FYGPASFITFVNCMYFLSIFI). The Cytoplasmic portion of the chain corresponds to 930-985 (QLKRHPERKYELKEPTEEQQRLAANENGEINHQDSMSLSLISTSTLENEHSFQSQL). A helical membrane pass occupies residues 986 to 1006 (LGASLTLLLYVILWMFGAMAV). Topologically, residues 1007–1013 (SLYYPLD) are extracellular. Residues 1014–1034 (LVFSFFFGATCLSFSAFMMVH) traverse the membrane as a helical segment. At 1035–1310 (HCINREDVRL…TGLWKHETTV (276 aa)) the chain is on the cytoplasmic side. 3 disordered regions span residues 1065-1084 (PPNS…SSAE), 1187-1208 (VEGS…GHSR), and 1221-1264 (YNPP…ADLE). Positions 1222-1239 (NPPQQDSSDACSTLPKSS) are enriched in polar residues. Positions 1308–1310 (TTV) match the PDZ-binding motif.

This sequence belongs to the G-protein coupled receptor 2 family. Adhesion G-protein coupled receptor (ADGR) subfamily. In terms of assembly, interacts (via PDZ-binding motif) with DLG1. Expressed by spermatogonial progenitor cells located within the outer cell layer of the seminiferous tubule and by multipotent adult spermatogonial-derived stem cells.

Its subcellular location is the membrane. Orphan receptor that may have a role in planar cell polarity pathway. This Mus musculus (Mouse) protein is Adhesion G protein-coupled receptor A3 (Adgra3).